Reading from the N-terminus, the 100-residue chain is Urease subunit gamma (100 aa).

This sequence belongs to the urease gamma subunit family. Heterotrimer of UreA (gamma), UreB (beta) and UreC (alpha) subunits. Three heterotrimers associate to form the active enzyme.

It is found in the cytoplasm. It catalyses the reaction urea + 2 H2O + H(+) = hydrogencarbonate + 2 NH4(+). The protein operates within nitrogen metabolism; urea degradation; CO(2) and NH(3) from urea (urease route): step 1/1. The polypeptide is Urease subunit gamma (Polaromonas naphthalenivorans (strain CJ2)).